Reading from the N-terminus, the 261-residue chain is 7beta-hydroxysteroid dehydrogenase (261 aa).

NADP(+)-binding positions include 17–21, 40–41, and 66–67; these read TEGIG, RR, and DL. Tyr-156 acts as the Proton acceptor in catalysis.

It belongs to the short-chain dehydrogenases/reductases (SDR) family. In terms of assembly, homodimer.

It carries out the reaction a 7beta-hydroxysteroid + NADP(+) = a 7-oxosteroid + NADPH + H(+). It catalyses the reaction ursocholate + NADP(+) = 3alpha,12alpha-dihydroxy-7-oxo-5beta-cholanate + NADPH + H(+). The catalysed reaction is 7-oxolithocholate + NADPH + H(+) = ursodeoxycholate + NADP(+). The enzyme catalyses 3alpha,7beta-dihydroxy-12-oxo-5beta-cholan-24-oate + NADP(+) = 7,12-dioxo-lithocholate + NADPH + H(+). It carries out the reaction 7beta-hydroxy-3,12-dioxo-5beta-cholan-24-oate + NADP(+) = dehydrocholate + NADPH + H(+). In terms of biological role, 7beta-hydroxysteroid dehydrogenase that catalyzes the reduction of the 7-oxo group of 7-oxosteroids, such as 3alpha,12alpha-dihydroxy-7-oxo-5beta-cholanate, 7-oxolithocholate, 7,12-dioxo-lithocholate and dehydrocholate, to the corresponding 7beta-hydroxysteroids. Is also able to catalyze the reverse oxidation reactions. Together with 7alpha-HSDH encoded in the adjacent gene, is likely involved in the epimerization of the hydroxy group at C-7 of primary bile acids through 7-keto bile acid intermediates. This Clostridium sardiniense (Clostridium absonum) protein is 7beta-hydroxysteroid dehydrogenase.